The sequence spans 121 residues: Lysozyme (121 aa).

The 121-residue stretch at 1-121 (KTFTRCELVQ…NKPLPDISKC (121 aa)) folds into the C-type lysozyme domain. Disulfide bonds link C6–C121, C27–C110, C62–C76, and C72–C90. Residues E32 and D50 contribute to the active site.

Belongs to the glycosyl hydrolase 22 family.

The catalysed reaction is Hydrolysis of (1-&gt;4)-beta-linkages between N-acetylmuramic acid and N-acetyl-D-glucosamine residues in a peptidoglycan and between N-acetyl-D-glucosamine residues in chitodextrins.. Functionally, lysozymes have primarily a bacteriolytic function; those in tissues and body fluids are associated with the monocyte-macrophage system and enhance the activity of immunoagents. The chain is Lysozyme from Galleria mellonella (Greater wax moth).